The primary structure comprises 109 residues: Large ribosomal subunit protein uL22 (109 aa).

The protein belongs to the universal ribosomal protein uL22 family. In terms of assembly, part of the 50S ribosomal subunit.

Its function is as follows. This protein binds specifically to 23S rRNA; its binding is stimulated by other ribosomal proteins, e.g. L4, L17, and L20. It is important during the early stages of 50S assembly. It makes multiple contacts with different domains of the 23S rRNA in the assembled 50S subunit and ribosome. In terms of biological role, the globular domain of the protein is located near the polypeptide exit tunnel on the outside of the subunit, while an extended beta-hairpin is found that lines the wall of the exit tunnel in the center of the 70S ribosome. This Psychrobacter cryohalolentis (strain ATCC BAA-1226 / DSM 17306 / VKM B-2378 / K5) protein is Large ribosomal subunit protein uL22.